The sequence spans 895 residues: Cellulose 1,4-beta-cellobiosidase (895 aa).

A signal peptide spans 1–27 (MNFRRMLCAAIVLTIVLSIMLPSTVFA). Residues 40–199 (NDLLYERTFD…YLDDVSLYDP (160 aa)) enclose the CBM-cenC domain. The tract at residues 199–240 (PRFVKPVEYVLPQPDVRVNQVGYLPFAKKYATVVSSSTSPLK) is linker. The catalytic stretch occupies residues 241–815 (WQLLNSANQV…WVTAYLDEID (575 aa)). The Nucleophile role is filled by Asp386. Catalysis depends on residues His737, Asp786, and Glu795. The Dockerin domain maps to 828-894 (PEVIYGDCNG…ILKEIDVLPH (67 aa)).

This sequence belongs to the glycosyl hydrolase 9 (cellulase E) family.

The protein localises to the secreted. The catalysed reaction is Hydrolysis of (1-&gt;4)-beta-D-glucosidic linkages in cellulose and cellotetraose, releasing cellobiose from the non-reducing ends of the chains.. Its activity is regulated as follows. Inhibited by cellobiose. This Acetivibrio thermocellus (Hungateiclostridium thermocellum) protein is Cellulose 1,4-beta-cellobiosidase (celK).